We begin with the raw amino-acid sequence, 125 residues long: Snaclec VP12 subunit B (125 aa).

3 disulfides stabilise this stretch: cysteine 4/cysteine 15, cysteine 32/cysteine 121, and cysteine 98/cysteine 113. A C-type lectin domain is found at 11–122 (FEKYCYKVFQ…CNDPRYFVCK (112 aa)).

The protein belongs to the snaclec family. In terms of assembly, heterodimer of subunits alpha and beta; disulfide-linked. In terms of tissue distribution, expressed by the venom gland.

Its subcellular location is the secreted. In terms of biological role, inhibits integrin alpha-2/beta-1- (ITGA2/ITGB1) dependent melanoma metastasis. The protein is Snaclec VP12 subunit B of Daboia palaestinae (Palestine viper).